Consider the following 158-residue polypeptide: MLNQLDNLTERVRGSNKLVDRWLHVRKHLLVAYYNLVGIKPGKESYMRLNEKALDDFCQSLVDYLSAGHFSIYERILHKLEGNGQLARAAKIWPQLEANTQQIMDDYDSSLETAIDHDNYLEFQQVLSDIGEALEARFVLEDKLILLVLDAARVKYPA.

Belongs to the Rsd/AlgQ family. As to quaternary structure, interacts with RpoD.

It localises to the cytoplasm. Functionally, binds RpoD and negatively regulates RpoD-mediated transcription activation by preventing the interaction between the primary sigma factor RpoD with the catalytic core of the RNA polymerase and with promoter DNA. May be involved in replacement of the RNA polymerase sigma subunit from RpoD to RpoS during the transition from exponential growth to the stationary phase. This chain is Regulator of sigma D, found in Escherichia coli (strain UTI89 / UPEC).